Consider the following 622-residue polypeptide: Threonine--tRNA ligase (622 aa).

The interval 1–141 is editing domain; the sequence is MKTLLIHSDY…SRKITTERKE (141 aa). A catalytic region spans residues 199–498; the sequence is PHVKYIKEKE…TLENRPPALP (300 aa). The Zn(2+) site is built by C291, H343, and H467.

The protein belongs to the class-II aminoacyl-tRNA synthetase family. As to quaternary structure, homodimer. The cofactor is Zn(2+).

Its subcellular location is the cytoplasm. It catalyses the reaction tRNA(Thr) + L-threonine + ATP = L-threonyl-tRNA(Thr) + AMP + diphosphate + H(+). Functionally, catalyzes the attachment of threonine to tRNA(Thr) in a two-step reaction: L-threonine is first activated by ATP to form Thr-AMP and then transferred to the acceptor end of tRNA(Thr). Also edits incorrectly charged L-seryl-tRNA(Thr). In Methanococcus maripaludis (strain C6 / ATCC BAA-1332), this protein is Threonine--tRNA ligase.